Here is a 370-residue protein sequence, read N- to C-terminus: 4-hydroxy-3-methylbut-2-en-1-yl diphosphate synthase (flavodoxin) (370 aa).

[4Fe-4S] cluster-binding residues include Cys-270, Cys-273, Cys-305, and Glu-312.

This sequence belongs to the IspG family. It depends on [4Fe-4S] cluster as a cofactor.

The enzyme catalyses (2E)-4-hydroxy-3-methylbut-2-enyl diphosphate + oxidized [flavodoxin] + H2O + 2 H(+) = 2-C-methyl-D-erythritol 2,4-cyclic diphosphate + reduced [flavodoxin]. It participates in isoprenoid biosynthesis; isopentenyl diphosphate biosynthesis via DXP pathway; isopentenyl diphosphate from 1-deoxy-D-xylulose 5-phosphate: step 5/6. Its function is as follows. Converts 2C-methyl-D-erythritol 2,4-cyclodiphosphate (ME-2,4cPP) into 1-hydroxy-2-methyl-2-(E)-butenyl 4-diphosphate. The polypeptide is 4-hydroxy-3-methylbut-2-en-1-yl diphosphate synthase (flavodoxin) (Azotobacter vinelandii (strain DJ / ATCC BAA-1303)).